The following is a 600-amino-acid chain: DNA mismatch repair protein MutL (600 aa).

Belongs to the DNA mismatch repair MutL/HexB family.

This protein is involved in the repair of mismatches in DNA. It is required for dam-dependent methyl-directed DNA mismatch repair. May act as a 'molecular matchmaker', a protein that promotes the formation of a stable complex between two or more DNA-binding proteins in an ATP-dependent manner without itself being part of a final effector complex. This Sinorhizobium fredii (strain NBRC 101917 / NGR234) protein is DNA mismatch repair protein MutL.